Reading from the N-terminus, the 477-residue chain is Bifunctional protein HldE (477 aa).

Residues 1–318 are ribokinase; the sequence is MQIQLPMFQN…RRAVQQEQGA (318 aa). 195–198 lines the ATP pocket; that stretch reads NLSE. D264 is an active-site residue. Residues 344-477 form a cytidylyltransferase region; it reads FTNGCFDIIH…VEKIRKDQVK (134 aa).

In the N-terminal section; belongs to the carbohydrate kinase PfkB family. This sequence in the C-terminal section; belongs to the cytidylyltransferase family. In terms of assembly, homodimer.

The catalysed reaction is D-glycero-beta-D-manno-heptose 7-phosphate + ATP = D-glycero-beta-D-manno-heptose 1,7-bisphosphate + ADP + H(+). The enzyme catalyses D-glycero-beta-D-manno-heptose 1-phosphate + ATP + H(+) = ADP-D-glycero-beta-D-manno-heptose + diphosphate. Its pathway is nucleotide-sugar biosynthesis; ADP-L-glycero-beta-D-manno-heptose biosynthesis; ADP-L-glycero-beta-D-manno-heptose from D-glycero-beta-D-manno-heptose 7-phosphate: step 1/4. The protein operates within nucleotide-sugar biosynthesis; ADP-L-glycero-beta-D-manno-heptose biosynthesis; ADP-L-glycero-beta-D-manno-heptose from D-glycero-beta-D-manno-heptose 7-phosphate: step 3/4. Its function is as follows. Catalyzes the phosphorylation of D-glycero-D-manno-heptose 7-phosphate at the C-1 position to selectively form D-glycero-beta-D-manno-heptose-1,7-bisphosphate. In terms of biological role, catalyzes the ADP transfer from ATP to D-glycero-beta-D-manno-heptose 1-phosphate, yielding ADP-D-glycero-beta-D-manno-heptose. This is Bifunctional protein HldE from Hahella chejuensis (strain KCTC 2396).